The following is a 129-amino-acid chain: Small ribosomal subunit protein uS11 (129 aa).

This sequence belongs to the universal ribosomal protein uS11 family. As to quaternary structure, part of the 30S ribosomal subunit. Interacts with proteins S7 and S18. Binds to IF-3.

Its function is as follows. Located on the platform of the 30S subunit, it bridges several disparate RNA helices of the 16S rRNA. Forms part of the Shine-Dalgarno cleft in the 70S ribosome. In Rhodopseudomonas palustris (strain HaA2), this protein is Small ribosomal subunit protein uS11.